A 239-amino-acid chain; its full sequence is MAATASSLTIASSFSEPRTQIHSSRRLNLPLQYSIPYKVLRSRSRRLGLVVSSVSAPNVELRTGPDDLISTLLSKVANSDGGVTLSPEQHKEVAQVAGELQKYCVKEPVKNPLIFGDWEVVYCSRPTSPGGGYRSVIGRLFFKTKEMIQAIDAPDIVRNKVSINAFGFLDGDVSLTGKLKALDSEWVQVIFEPPEIKVGSLEFKYGFESEVKLRITYVDEKLRLGLGSKGSLFVFRRRQ.

A chloroplast-targeting transit peptide spans 1–52 (MAATASSLTIASSFSEPRTQIHSSRRLNLPLQYSIPYKVLRSRSRRLGLVVS). Serine 53 carries the post-translational modification N-acetylserine.

This sequence belongs to the PAP/fibrillin family.

It is found in the plastid. The protein localises to the chloroplast. The protein is Probable plastid-lipid-associated protein 8, chloroplastic (PAP8) of Arabidopsis thaliana (Mouse-ear cress).